Reading from the N-terminus, the 353-residue chain is UPF0283 membrane protein YcjF (353 aa).

A run of 3 helical transmembrane segments spans residues 70–90 (MVMG…VQWT), 100–120 (VALG…GSVV), and 213–233 (ESTL…FIAW).

It belongs to the UPF0283 family.

The protein resides in the cell inner membrane. The sequence is that of UPF0283 membrane protein YcjF from Salmonella schwarzengrund (strain CVM19633).